We begin with the raw amino-acid sequence, 300 residues long: 33 kDa chaperonin (300 aa).

Intrachain disulfides connect Cys-235–Cys-237 and Cys-269–Cys-272.

The protein belongs to the HSP33 family. In terms of processing, under oxidizing conditions two disulfide bonds are formed involving the reactive cysteines. Under reducing conditions zinc is bound to the reactive cysteines and the protein is inactive.

The protein resides in the cytoplasm. Redox regulated molecular chaperone. Protects both thermally unfolding and oxidatively damaged proteins from irreversible aggregation. Plays an important role in the bacterial defense system toward oxidative stress. This chain is 33 kDa chaperonin, found in Pseudomonas savastanoi pv. phaseolicola (strain 1448A / Race 6) (Pseudomonas syringae pv. phaseolicola (strain 1448A / Race 6)).